The sequence spans 426 residues: Glucan endo-1,3-beta-glucosidase 11 (426 aa).

The N-terminal stretch at 1 to 30 (MELTSFHRSSLLFLISLTLIILPTTTTSIG) is a signal peptide. The N-linked (GlcNAc...) asparagine glycan is linked to asparagine 112. Glutamate 121 acts as the Proton donor in catalysis. Residue asparagine 126 is glycosylated (N-linked (GlcNAc...) asparagine). The active-site Nucleophile is the glutamate 266. Over residues 360–372 (GGGTGGGNSSSGG) the composition is skewed to gly residues. Residues 360-389 (GGGTGGGNSSSGGGRDKSPVFPVSPVAPDS) form a disordered region. Asparagine 367 is a glycosylation site (N-linked (GlcNAc...) asparagine). The GPI-anchor amidated serine moiety is linked to residue serine 398. Residues 399-426 (ASPVTGKRKGKGAILSLVVSMLLARHLL) constitute a propeptide, removed in mature form.

This sequence belongs to the glycosyl hydrolase 17 family.

The protein resides in the secreted. Its subcellular location is the cell wall. It localises to the cell membrane. The enzyme catalyses Hydrolysis of (1-&gt;3)-beta-D-glucosidic linkages in (1-&gt;3)-beta-D-glucans.. This Arabidopsis thaliana (Mouse-ear cress) protein is Glucan endo-1,3-beta-glucosidase 11.